Reading from the N-terminus, the 428-residue chain is BTB/POZ domain-containing protein KCTD16 (428 aa).

Residues 25 to 98 (EVVELNVGGQ…LRDRQVVLPD (74 aa)) enclose the BTB domain. At Tyr112 the chain carries Phosphotyrosine. Residues Ser130, Ser137, Ser143, and Ser146 each carry the phosphoserine modification.

In terms of assembly, homopentamer; forms an open pentamer. In contrast to other BTB domain-containing proteins, does not interact with CUL3. Interacts as a tetramer with GABRB1 and GABRB2.

It localises to the presynaptic cell membrane. It is found in the postsynaptic cell membrane. Auxiliary subunit of GABA-B receptors that determine the pharmacology and kinetics of the receptor response. Increases agonist potency and markedly alter the G-protein signaling of the receptors by accelerating onset and promoting desensitization. The sequence is that of BTB/POZ domain-containing protein KCTD16 (KCTD16) from Homo sapiens (Human).